A 744-amino-acid polypeptide reads, in one-letter code: Spalt-like protein sem-4 (744 aa).

The interval 6 to 32 (AEMAAVSSRRKQSKPRRMSGEGDAMMS) is disordered. Over residues 13-22 (SRRKQSKPRR) the composition is skewed to basic residues. 4 consecutive C2H2-type zinc fingers follow at residues 99–124 (SSCPIQSCSQSFSSPAALTWHVLDAH), 305–327 (NQCILCRRVLSCKSALQMHYRTH), 333–355 (FKCKICQRAFTTKGNLKTHMGVH), and 411–433 (QQCPICQQRFLNAGELAVHITEH). The segment covering 487-497 (KNDSSPNTDTS) has biased composition (polar residues). Disordered stretches follow at residues 487–530 (KNDS…RQDI) and 542–562 (KLEEPPILEQQVSTTPNPKNE). The span at 499–509 (VEEKITRDDPP) shows a compositional bias: basic and acidic residues. Residues 513–525 (SLSPSNSSDSSSS) are compositionally biased toward low complexity. Over residues 551 to 561 (QQVSTTPNPKN) the composition is skewed to polar residues. C2H2-type zinc fingers lie at residues 589–611 (HQCGVCFKHFSSSSALQIHMRTH), 617–639 (FKCDMCGRAFTTRGNLKVHMGTH), and 701–723 (TVCSVCQKVCQSPNELEQHLKEH). Residues 725–744 (NNGSSAAPTPLASAATPPPS) are disordered. The span at 728–744 (SSAAPTPLASAATPPPS) shows a compositional bias: low complexity.

Belongs to the sal C2H2-type zinc-finger protein family.

The protein resides in the nucleus. Its function is as follows. Transcription factor, involved in positive and negative modulation of transcription. Binds to multiple DNA sequence motifs in the regulatory elements of target genes, including homeobox selector egl-5 and LIM homeobox mec-3. Involved in cell-fate regulation in multiple lineages, including neuronal, mesodermal and vulval. Required to regulate the fate of PLM touch receptor neurons, acting via negative modulation of transcription of egl-5 and mec-3. May modulate gene expression by interacting with different transcription factors during neuronal and mesodermal cell development. Promotes the proliferative sex myoblast (SM) fate, in a cell autonomous manner, acting via the SoxC transcription factor sem-2. Involved in vulval cell-fate determination, acting by regulating expression of homeobox protein lin-39, and may link lin-39 to incoming signaling pathways. Plays a role in detoxification of reactive oxygen species (ROS), by regulating expression of transcription factor skn-1 and the phase II detoxification genes. This is Spalt-like protein sem-4 from Caenorhabditis elegans.